A 455-amino-acid chain; its full sequence is Beta-cyclopiazonate dehydrogenase (455 aa).

Residues 1-20 (MATRIASFIGISTVASLALA) form the signal peptide.

This sequence belongs to the beta-cyclopiazonate dehydrogenase family. FAD is required as a cofactor.

The catalysed reaction is beta-cyclopiazonate + A = alpha-cyclopiazonate + AH2. Functionally, beta-cyclopiazonate dehydrogenase involved in the synthesis of the fungal neurotoxin alpha-cyclopiazonic acid (CPA). CpaO carries out the dehydrogenation of beta-CPA to yield an unstable enimine product, which is captured by intramolecular cyclization to create the pentacyclic fused scaffold of alpha-cyclopiazonate. The chain is Beta-cyclopiazonate dehydrogenase from Aspergillus flavus (strain ATCC 200026 / FGSC A1120 / IAM 13836 / NRRL 3357 / JCM 12722 / SRRC 167).